A 430-amino-acid chain; its full sequence is Tol-Pal system protein TolB (430 aa).

The first 21 residues, 1–21 (MKQALRVAFGFLMLWAAVLHA), serve as a signal peptide directing secretion.

This sequence belongs to the TolB family. In terms of assembly, the Tol-Pal system is composed of five core proteins: the inner membrane proteins TolA, TolQ and TolR, the periplasmic protein TolB and the outer membrane protein Pal. They form a network linking the inner and outer membranes and the peptidoglycan layer.

It localises to the periplasm. Functionally, part of the Tol-Pal system, which plays a role in outer membrane invagination during cell division and is important for maintaining outer membrane integrity. TolB occupies a key intermediary position in the Tol-Pal system because it communicates directly with both membrane-embedded components, Pal in the outer membrane and TolA in the inner membrane. This is Tol-Pal system protein TolB from Salmonella choleraesuis (strain SC-B67).